A 61-amino-acid chain; its full sequence is ATP synthase subunit J, mitochondrial (61 aa).

A helical transmembrane segment spans residues 13-32 (LVKYYWPFFVGFGLTFYGVA).

F-type ATP synthases have 2 components, the catalytic core F(1) and the membrane-embedded component F(0), linked together by a central stalk and a peripheral stalk. The central stalk, also called rotor shaft, is often seen as part of F(1). The peripheral stalk is seen as part of F(0). F(0) contains the membrane channel next to the rotor. F-type ATP synthases form dimers but each monomer functions independently in ATP generation. The dimer consists of 18 different polypeptides: ATP1 (subunit alpha, part of F(1), 3 molecules per monomer), ATP2 (subunit beta, part of F(1), 3 molecules per monomer), ATP3 (subunit gamma, part of the central stalk), ATP4 (subunit b, part of the peripheral stalk), ATP5/OSCP (subunit 5/OSCP, part of the peripheral stalk), ATP6 (subunit a, part of the peripheral stalk), ATP7 (subunit d, part of the peripheral stalk), ATP8 (subunit 8, part of the peripheral stalk), OLI1 (subunit c, part of the rotor, 10 molecules per monomer), ATP14 (subunit h, part of the peripheral stalk), ATP15 (subunit epsilon, part of the central stalk), ATP16 (subunit delta, part of the central stalk), ATP17 (subunit f, part of the peripheral stalk), ATP18 (subunit i/j, part of the peripheral stalk). Dimer-specific subunits are ATP19 (subunit k, at interface between monomers), ATP20 (subunit g, at interface between monomers), TIM11 (subunit e, at interface between monomers). Also contains subunit L.

The protein localises to the mitochondrion inner membrane. Its function is as follows. Mitochondrial membrane ATP synthase (F(1)F(0) ATP synthase or Complex V) produces ATP from ADP in the presence of a proton gradient across the membrane which is generated by electron transport complexes of the respiratory chain. F-type ATP synthases consist of two structural domains, F(1) - containing the extramembraneous catalytic core, and F(0) - containing the membrane proton channel, linked together by a central stalk and a peripheral stalk. During catalysis, ATP synthesis in the catalytic domain of F(1) is coupled via a rotary mechanism of the central stalk subunits to proton translocation. Part of the complex F(0) domain. Minor subunit located with subunit a/ATP6 in the membrane. The polypeptide is ATP synthase subunit J, mitochondrial (Pichia angusta (Yeast)).